The primary structure comprises 577 residues: 2-succinyl-5-enolpyruvyl-6-hydroxy-3-cyclohexene-1-carboxylate synthase (577 aa).

This sequence belongs to the TPP enzyme family. MenD subfamily. Homodimer. Mg(2+) serves as cofactor. Mn(2+) is required as a cofactor. Requires thiamine diphosphate as cofactor.

It carries out the reaction isochorismate + 2-oxoglutarate + H(+) = 5-enolpyruvoyl-6-hydroxy-2-succinyl-cyclohex-3-ene-1-carboxylate + CO2. Its pathway is quinol/quinone metabolism; 1,4-dihydroxy-2-naphthoate biosynthesis; 1,4-dihydroxy-2-naphthoate from chorismate: step 2/7. It participates in quinol/quinone metabolism; menaquinone biosynthesis. Catalyzes the thiamine diphosphate-dependent decarboxylation of 2-oxoglutarate and the subsequent addition of the resulting succinic semialdehyde-thiamine pyrophosphate anion to isochorismate to yield 2-succinyl-5-enolpyruvyl-6-hydroxy-3-cyclohexene-1-carboxylate (SEPHCHC). The sequence is that of 2-succinyl-5-enolpyruvyl-6-hydroxy-3-cyclohexene-1-carboxylate synthase from Enterococcus faecalis (strain ATCC 700802 / V583).